A 673-amino-acid polypeptide reads, in one-letter code: DNA ligase (673 aa).

Residues 33-37 (DAEYD), 82-83 (SL), and Glu-114 each bind NAD(+). Lys-116 functions as the N6-AMP-lysine intermediate in the catalytic mechanism. Arg-137, Glu-174, Lys-291, and Lys-315 together coordinate NAD(+). The Zn(2+) site is built by Cys-409, Cys-412, Cys-427, and Cys-433. A BRCT domain is found at 592–673 (AQEQPLAGLV…LINLLEQHNG (82 aa)).

It belongs to the NAD-dependent DNA ligase family. LigA subfamily. The cofactor is Mg(2+). Requires Mn(2+) as cofactor.

The enzyme catalyses NAD(+) + (deoxyribonucleotide)n-3'-hydroxyl + 5'-phospho-(deoxyribonucleotide)m = (deoxyribonucleotide)n+m + AMP + beta-nicotinamide D-nucleotide.. Its function is as follows. DNA ligase that catalyzes the formation of phosphodiester linkages between 5'-phosphoryl and 3'-hydroxyl groups in double-stranded DNA using NAD as a coenzyme and as the energy source for the reaction. It is essential for DNA replication and repair of damaged DNA. This Pseudoalteromonas translucida (strain TAC 125) protein is DNA ligase.